A 138-amino-acid polypeptide reads, in one-letter code: Basic phospholipase A2 vaspin B chain (138 aa).

A signal peptide spans 1-16; that stretch reads MRILWIVAVCLIGVEG. Disulfide bonds link C42/C131, C44/C60, C59/C111, C65/C138, C66/C104, C73/C97, and C91/C102. Y43, G45, and G47 together coordinate Ca(2+). H63 is a catalytic residue. D64 contributes to the Ca(2+) binding site. The active site involves D105.

The protein belongs to the phospholipase A2 family. Group II subfamily. D49 sub-subfamily. In terms of assembly, heterodimer of a weakly toxic basic protein having phospholipase A2 activity (B chain (AC Q8JFG1)) and a non-toxic acidic protein functioning as its inhibitor (A chain). Ca(2+) serves as cofactor. Expressed by the venom gland.

It localises to the secreted. The enzyme catalyses a 1,2-diacyl-sn-glycero-3-phosphocholine + H2O = a 1-acyl-sn-glycero-3-phosphocholine + a fatty acid + H(+). Its function is as follows. Heterodimer: postsynaptic neurotoxin. Functionally, monomer: snake venom phospholipase A2 (PLA2) that shows postsynaptic neurotoxicity. PLA2 catalyzes the calcium-dependent hydrolysis of the 2-acyl groups in 3-sn-phosphoglycerides. This Vipera aspis aspis (Aspic viper) protein is Basic phospholipase A2 vaspin B chain.